Reading from the N-terminus, the 150-residue chain is 6,7-dimethyl-8-ribityllumazine synthase (150 aa).

Residues Phe11, 42–44 (IFE), and 73–75 (CAI) each bind 5-amino-6-(D-ribitylamino)uracil. Residue 78–79 (ES) participates in (2S)-2-hydroxy-3-oxobutyl phosphate binding. Residue His81 is the Proton donor of the active site. Asn106 is a binding site for 5-amino-6-(D-ribitylamino)uracil. Arg120 contacts (2S)-2-hydroxy-3-oxobutyl phosphate.

It belongs to the DMRL synthase family.

It carries out the reaction (2S)-2-hydroxy-3-oxobutyl phosphate + 5-amino-6-(D-ribitylamino)uracil = 6,7-dimethyl-8-(1-D-ribityl)lumazine + phosphate + 2 H2O + H(+). It participates in cofactor biosynthesis; riboflavin biosynthesis; riboflavin from 2-hydroxy-3-oxobutyl phosphate and 5-amino-6-(D-ribitylamino)uracil: step 1/2. In terms of biological role, catalyzes the formation of 6,7-dimethyl-8-ribityllumazine by condensation of 5-amino-6-(D-ribitylamino)uracil with 3,4-dihydroxy-2-butanone 4-phosphate. This is the penultimate step in the biosynthesis of riboflavin. The polypeptide is 6,7-dimethyl-8-ribityllumazine synthase (Paramagnetospirillum magneticum (strain ATCC 700264 / AMB-1) (Magnetospirillum magneticum)).